The chain runs to 336 residues: PHD finger protein 11 (336 aa).

Residues 1 to 20 (MAEETAPPCGPVSTGGSLSP) are disordered. A C2HC pre-PHD-type zinc finger spans residues 25–61 (KRTCALCPDGHEWSVIYFAPSANIAAHENCLLYSSGL). A PHD-type zinc finger spans residues 91-143 (LKCSLCNKGGATVGCDLSSCRKSYHYVCAKKDHAIPQVDEDLGTYKIFCPEHP). Disordered stretches follow at residues 139-179 (CPEH…KKMK) and 303-336 (DPSGSTSGSLLPPEDHQCRCQESPEVQAGSGDSL). Residues 303 to 314 (DPSGSTSGSLLP) are compositionally biased toward low complexity.

Interacts with BRCA1 and RELA.

The protein resides in the nucleus. Positive regulator of Th1-type cytokine gene expression. The chain is PHD finger protein 11 (Phf11) from Rattus norvegicus (Rat).